Here is a 99-residue protein sequence, read N- to C-terminus: A-type ATP synthase subunit F (99 aa).

Belongs to the V-ATPase F subunit family. In terms of assembly, has multiple subunits with at least A(3), B(3), C, D, E, F, H, I and proteolipid K(x).

Its subcellular location is the cell membrane. Functionally, component of the A-type ATP synthase that produces ATP from ADP in the presence of a proton gradient across the membrane. The protein is A-type ATP synthase subunit F of Methanococcus maripaludis (strain C7 / ATCC BAA-1331).